The primary structure comprises 402 residues: Multidrug resistance protein MdtH (402 aa).

Transmembrane regions (helical) follow at residues 13–33 (YFLLVDNMLVVLGFFVVFPLI), 34–54 (SIRFVDQMGWAALMVGIALGL), 99–116 (PWLLWFSCFLSGLGGTLF), 139–159 (LLMMQDSAGAVIGALLGSWLL), 165–185 (LVCATGAALFILCAAFNAWLL), 214–234 (VLTLTGYYMLAVQVMLMLPIM), 243–263 (AAVKWMYAIEACLSLTLLYPI), 277–297 (LMAGLLVMTLSMMPIGLVSSV), 300–320 (LFVLICTFYIGSIIAEPARET), 340–360 (LGLALGGALGYAGGGWLFDSG), and 368–388 (LPWVMLGVVGFITLIALWWQF).

Belongs to the major facilitator superfamily. DHA1 family. MdtH (TC 2.A.1.2.21) subfamily.

The protein localises to the cell inner membrane. This chain is Multidrug resistance protein MdtH, found in Enterobacter sp. (strain 638).